Consider the following 902-residue polypeptide: Ephrin type-B receptor 1-B (902 aa).

The Eph LBD domain maps to 1–119; it reads HRVYVEMRFT…FFKKCPSVVQ (119 aa). Over 1–459 the chain is Extracellular; that stretch reads HRVYVEMRFT…KSELREQLPL (459 aa). 2 consecutive Fibronectin type-III domains span residues 240 to 350 and 351 to 448; these read VPSG…TNQA and APSS…TEED. N-linked (GlcNAc...) asparagine glycans are attached at residues Asn252, Asn344, and Asn398. A helical transmembrane segment spans residues 460 to 480; sequence IAGSAAAGVVFIVSLVAISIV. At 481–902 the chain is on the cytoplasmic side; sequence CSRKRTYSKE…QISQSPTSIA (422 aa). The 264-residue stretch at 537 to 800 folds into the Protein kinase domain; sequence VKIEEVIGAG…EIVNTLDKMI (264 aa). ATP is bound by residues 543–551 and Lys569; that span reads IGAGEFGEV. The active-site Proton acceptor is Asp662. Residues 829–893 form the SAM domain; it reads SAFTSVDDWL…LNSIQSMRVQ (65 aa). The PDZ-binding signature appears at 900-902; the sequence is SIA.

The protein belongs to the protein kinase superfamily. Tyr protein kinase family. Ephrin receptor subfamily. Heterotetramer upon binding of the ligand. The heterotetramer is composed of an ephrin dimer and a receptor dimer. Oligomerization is probably required to induce biological responses. Post-translationally, phosphorylated. Autophosphorylation is stimulated by ligands. As to expression, expressed in the embryo in the brain and spinal cord and in the first and fourth visceral arches. Most abundant in adult brain, with lower levels in eye, heart, ovary, oviduct, lung and pharynx.

Its subcellular location is the cell membrane. The protein localises to the early endosome membrane. It is found in the cell projection. The protein resides in the dendrite. It catalyses the reaction L-tyrosyl-[protein] + ATP = O-phospho-L-tyrosyl-[protein] + ADP + H(+). In terms of biological role, receptor tyrosine kinase which binds promiscuously transmembrane ephrin-B family ligands residing on adjacent cells, leading to contact-dependent bidirectional signaling into neighboring cells. The signaling pathway downstream of the receptor is referred to as forward signaling while the signaling pathway downstream of the ephrin ligand is referred to as reverse signaling. May play a role in axon guidance during nervous system development. May also play an important redundant role with other ephrin-B receptors in development and maturation of dendritic spines and synapse formation. More generally, may play a role in targeted cell migration and adhesion. Upon activation by ephrin-B ligands activates the MAPK/ERK and the JNK signaling cascades to regulate cell migration and adhesion respectively. The protein is Ephrin type-B receptor 1-B (ephb1-b) of Xenopus laevis (African clawed frog).